A 374-amino-acid polypeptide reads, in one-letter code: NADH-quinone oxidoreductase subunit D 1 (374 aa).

It belongs to the complex I 49 kDa subunit family. As to quaternary structure, NDH-1 is composed of 14 different subunits. Subunits NuoB, C, D, E, F, and G constitute the peripheral sector of the complex.

The protein localises to the cell membrane. It carries out the reaction a quinone + NADH + 5 H(+)(in) = a quinol + NAD(+) + 4 H(+)(out). Its function is as follows. NDH-1 shuttles electrons from NADH, via FMN and iron-sulfur (Fe-S) centers, to quinones in the respiratory chain. The immediate electron acceptor for the enzyme in this species is believed to be ubiquinone. Couples the redox reaction to proton translocation (for every two electrons transferred, four hydrogen ions are translocated across the cytoplasmic membrane), and thus conserves the redox energy in a proton gradient. This is NADH-quinone oxidoreductase subunit D 1 from Roseiflexus sp. (strain RS-1).